Consider the following 290-residue polypeptide: MKTKHIIIVTGLSGAGKTTALNILEDMSYYTIDNLPLGLEKSLLDTEIEKLAVGIDIRTFKNTKDFFTFINYIKESGVKMDIIFIEAHEAIILGRYTLSRRAHPLKEVTLLRSILKEKKILFPIREIADLVIDTTEIKTVELEKRFKKFILAKDGENTDININIHIQSFGYKYGIPTDSDLMFDVRFIPNPYYIEKLKELNGFDEEVKEYVLSQKESKEFYFKLLPLLEFLIPQYIKEGKKHLTISIGCSGGQHRSVTFVNKLAEDLKNSKVLEYINVYVSHREKELGHW.

An ATP-binding site is contributed by 11–18 (GLSGAGKT). Residue 56–59 (DIRT) coordinates GTP.

This sequence belongs to the RapZ-like family.

Its function is as follows. Displays ATPase and GTPase activities. This is Nucleotide-binding protein FN1089 from Fusobacterium nucleatum subsp. nucleatum (strain ATCC 25586 / DSM 15643 / BCRC 10681 / CIP 101130 / JCM 8532 / KCTC 2640 / LMG 13131 / VPI 4355).